Reading from the N-terminus, the 491-residue chain is MEHQLTIYNTLDRKKELFVPLHAPHVGMYVCGPTVYGDAHLGHARPAITFDVLFRYLTRLGYKVRYVRNITDVGHLEHDADEGEDKIAKKARLEQLEPMEVVQYYLNRYHKAMEALNVLPPSIEPHASGHIIEQIELVKKILDAGYAYESQGSVYFDVAKYNKDYHYGKLSGRNLDDVLNTTRELDGQEEKHNPADFALWKRAQPEHIMRWPSPWGDGFPGWHAECTAMGRKYLGEHFDIHGGGMDLIFPHHECEIAQSVASQGDDMVHYWMHNNMITINGTKMGKSLGNFITLDEFFSGSHKLLTQAYSPMTIRFFILQAHYRSPVDFSNEALQAAEKGLSRLMEAVDSLEKITPAATSNVDVKSLRTKCFEAMNDDLNTPIVISHLFDGAKMINNIIAGNNTISADDLKDLKEVFHTFCFDILGLKEEIGSSDGREAAYGKVVDMLLEQRVKAKANKDWATSDLIRNELTALGFEIKDTKDGFEWKLNK.

Cys-31 provides a ligand contact to Zn(2+). Residues 33–43 carry the 'HIGH' region motif; sequence PTVYGDAHLGH. The Zn(2+) site is built by Cys-226, His-251, and Glu-255. The 'KMSKS' region signature appears at 283 to 287; the sequence is KMGKS. Residue Lys-286 coordinates ATP.

Belongs to the class-I aminoacyl-tRNA synthetase family. Monomer. Requires Zn(2+) as cofactor.

It is found in the cytoplasm. The catalysed reaction is tRNA(Cys) + L-cysteine + ATP = L-cysteinyl-tRNA(Cys) + AMP + diphosphate. The chain is Cysteine--tRNA ligase from Bacteroides fragilis (strain ATCC 25285 / DSM 2151 / CCUG 4856 / JCM 11019 / LMG 10263 / NCTC 9343 / Onslow / VPI 2553 / EN-2).